A 385-amino-acid chain; its full sequence is Mannitol-1-phosphate 5-dehydrogenase (385 aa).

Position 3 to 14 (Ala-3 to Gly-14) interacts with NAD(+).

The protein belongs to the mannitol dehydrogenase family.

It catalyses the reaction D-mannitol 1-phosphate + NAD(+) = beta-D-fructose 6-phosphate + NADH + H(+). The protein is Mannitol-1-phosphate 5-dehydrogenase (mtlD) of Buchnera aphidicola subsp. Acyrthosiphon pisum (strain APS) (Acyrthosiphon pisum symbiotic bacterium).